A 129-amino-acid polypeptide reads, in one-letter code: Glycine cleavage system H protein (129 aa).

The Lipoyl-binding domain maps to S24 to M106. An N6-lipoyllysine modification is found at K65.

The protein belongs to the GcvH family. As to quaternary structure, the glycine cleavage system is composed of four proteins: P, T, L and H. (R)-lipoate serves as cofactor.

Functionally, the glycine cleavage system catalyzes the degradation of glycine. The H protein shuttles the methylamine group of glycine from the P protein to the T protein. This chain is Glycine cleavage system H protein, found in Shewanella oneidensis (strain ATCC 700550 / JCM 31522 / CIP 106686 / LMG 19005 / NCIMB 14063 / MR-1).